Here is a 279-residue protein sequence, read N- to C-terminus: Zinc-finger homeodomain protein 1 (279 aa).

Positions Met1–Met13 are enriched in acidic residues. The tract at residues Met1–Val47 is disordered. Residues Tyr57–Glu106 form a ZF-HD dimerization-type; degenerate zinc finger. The tract at residues Arg168–Val190 is disordered. The homeobox DNA-binding region spans Lys215 to Leu278.

As to quaternary structure, homo- and heterodimer with other ZFHD proteins.

It localises to the nucleus. Putative transcription factor. The chain is Zinc-finger homeodomain protein 1 (ZHD1) from Oryza sativa subsp. japonica (Rice).